The primary structure comprises 182 residues: Segregation and condensation protein B (182 aa).

This sequence belongs to the ScpB family. As to quaternary structure, homodimer. Homodimerization may be required to stabilize the binding of ScpA to the Smc head domains. Component of a cohesin-like complex composed of ScpA, ScpB and the Smc homodimer, in which ScpA and ScpB bind to the head domain of Smc. The presence of the three proteins is required for the association of the complex with DNA.

The protein resides in the cytoplasm. Participates in chromosomal partition during cell division. May act via the formation of a condensin-like complex containing Smc and ScpA that pull DNA away from mid-cell into both cell halves. The protein is Segregation and condensation protein B of Staphylococcus saprophyticus subsp. saprophyticus (strain ATCC 15305 / DSM 20229 / NCIMB 8711 / NCTC 7292 / S-41).